The chain runs to 366 residues: Putative transcription factor PHD1 (366 aa).

The 107-residue stretch at 186-292 (RVITTMWEDE…KDIESIVDAR (107 aa)) folds into the HTH APSES-type domain. Residues 220-241 (GTKLLNVTKMTRGRRDGILRSE) constitute a DNA-binding region (H-T-H motif). Residues 294 to 366 (PSNKASLTPK…QTSRAKNELS (73 aa)) form a disordered region. The segment covering 312–328 (EPSDNKHEIATEIKPKS) has biased composition (basic and acidic residues).

This sequence belongs to the EFG1/PHD1/stuA family.

The protein resides in the nucleus. Its function is as follows. Putative transcription factor that functions in pseudohyphal growth. This chain is Putative transcription factor PHD1 (PHD1), found in Saccharomyces cerevisiae (strain ATCC 204508 / S288c) (Baker's yeast).